A 524-amino-acid chain; its full sequence is Bifunctional purine biosynthesis protein PurH (524 aa).

Positions Met-1 to Thr-149 constitute an MGS-like domain.

It belongs to the PurH family.

It catalyses the reaction (6R)-10-formyltetrahydrofolate + 5-amino-1-(5-phospho-beta-D-ribosyl)imidazole-4-carboxamide = 5-formamido-1-(5-phospho-D-ribosyl)imidazole-4-carboxamide + (6S)-5,6,7,8-tetrahydrofolate. The enzyme catalyses IMP + H2O = 5-formamido-1-(5-phospho-D-ribosyl)imidazole-4-carboxamide. It functions in the pathway purine metabolism; IMP biosynthesis via de novo pathway; 5-formamido-1-(5-phospho-D-ribosyl)imidazole-4-carboxamide from 5-amino-1-(5-phospho-D-ribosyl)imidazole-4-carboxamide (10-formyl THF route): step 1/1. The protein operates within purine metabolism; IMP biosynthesis via de novo pathway; IMP from 5-formamido-1-(5-phospho-D-ribosyl)imidazole-4-carboxamide: step 1/1. The protein is Bifunctional purine biosynthesis protein PurH of Chlorobium chlorochromatii (strain CaD3).